An 85-amino-acid chain; its full sequence is Hepcidin (85 aa).

The N-terminal stretch at 1 to 24 is a signal peptide; that stretch reads MKTFSVAVAVAVVLAFICLQESSA. Residues 25 to 64 constitute a propeptide that is removed on maturation; sequence VPVTEVQELEEPMSNEYQEMPVESWKMPYNNRHKRHSSPG. 4 disulfides stabilise this stretch: Cys-66–Cys-83, Cys-69–Cys-72, Cys-70–Cys-79, and Cys-73–Cys-82.

In terms of tissue distribution, predominantly expressed in liver.

Its subcellular location is the secreted. Functionally, seems to act as a signaling molecule involved in the maintenance of iron homeostasis. Seems to be required in conjunction with HFE to regulate both intestinal iron absorption and iron storage in macrophages. Antimicrobial activity against Gram-negative bacteria such as E.coli. The protein is Hepcidin (hamp) of Morone chrysops x Morone saxatilis (White bass x Striped bass).